The following is a 115-amino-acid chain: Glycine cleavage system H-like protein (115 aa).

Residues 17-99 (VVRLGLTEKM…EGEGWLAVVR (83 aa)) form the Lipoyl-binding domain. Residue lysine 58 is modified to N6-lipoyllysine.

The protein belongs to the GcvH family. (R)-lipoate serves as cofactor.

The sequence is that of Glycine cleavage system H-like protein from Chlamydia pneumoniae (Chlamydophila pneumoniae).